The primary structure comprises 217 residues: Phosphate-specific transport system accessory protein PhoU homolog 2 (217 aa).

It belongs to the PhoU family. As to quaternary structure, homodimer.

It is found in the cytoplasm. Functionally, plays a role in the regulation of phosphate uptake. The protein is Phosphate-specific transport system accessory protein PhoU homolog 2 of Methanothermobacter thermautotrophicus (strain ATCC 29096 / DSM 1053 / JCM 10044 / NBRC 100330 / Delta H) (Methanobacterium thermoautotrophicum).